A 512-amino-acid polypeptide reads, in one-letter code: NAD(P)H-quinone oxidoreductase subunit 2 B, chloroplastic (512 aa).

Helical transmembrane passes span 31–51 (FIFP…IDLT), 57–77 (IPWL…ALLF), 99–119 (IFQF…VEYI), 124–144 (MAIT…MFLC), 149–169 (LITI…LSGY), 183–203 (YLLM…WLYG), 229–249 (ISIA…LAPF), 261–281 (PTPV…ALAT), 295–315 (WHLL…LIAI), 323–343 (MLAY…IVGD), 354–374 (YMLF…LFGL), 395–415 (ALSL…AGFF), 418–438 (LYLF…IGLL), and 484–504 (MIVC…IIAI).

Belongs to the complex I subunit 2 family. As to quaternary structure, NDH is composed of at least 16 different subunits, 5 of which are encoded in the nucleus.

It is found in the plastid. It localises to the chloroplast thylakoid membrane. The enzyme catalyses a plastoquinone + NADH + (n+1) H(+)(in) = a plastoquinol + NAD(+) + n H(+)(out). It catalyses the reaction a plastoquinone + NADPH + (n+1) H(+)(in) = a plastoquinol + NADP(+) + n H(+)(out). NDH shuttles electrons from NAD(P)H:plastoquinone, via FMN and iron-sulfur (Fe-S) centers, to quinones in the photosynthetic chain and possibly in a chloroplast respiratory chain. The immediate electron acceptor for the enzyme in this species is believed to be plastoquinone. Couples the redox reaction to proton translocation, and thus conserves the redox energy in a proton gradient. The protein is NAD(P)H-quinone oxidoreductase subunit 2 B, chloroplastic of Arabidopsis thaliana (Mouse-ear cress).